A 462-amino-acid chain; its full sequence is B3 domain-containing protein REM8 (462 aa).

3 consecutive DNA-binding regions (TF-B3) follow at residues 11 to 103, 148 to 243, and 249 to 346; these read NKHF…LGPS, CFSQ…LCSR, and FVKL…FSKI. The interval 351-419 is disordered; the sequence is FEAEDRRHKR…NLQKTQACSV (69 aa). The segment covering 369 to 397 has biased composition (basic and acidic residues); that stretch reads ETDKGEPSRATKMGPELEKREKTAEKGEP. Residues 399–418 show a composition bias toward polar residues; it reads RASNKSSGKQGNLQKTQACS.

The protein localises to the nucleus. In Arabidopsis thaliana (Mouse-ear cress), this protein is B3 domain-containing protein REM8 (REM8).